We begin with the raw amino-acid sequence, 439 residues long: DNA 3'-5' translocase XPB2 (439 aa).

The segment at 1 to 54 (MVYLRYFKGLILSDAYAPGLKWSDELKAYSALAFKYRDVRKYFLEKEIEVEENV) is DRD domain. Positions 77–221 (VKAWLKEKRG…LYPILVGPIV (145 aa)) constitute a Helicase ATP-binding domain. ATP contacts are provided by residues 90–97 (LPTGAGKT) and Arg-127. The short motif at 174–177 (DEVH) is the DEAH box element. The RED motif motif lies at 205–207 (RDD). A flexible hinge region region spans residues 227–234 (EELAGKYI). Residues 248–307 (NEEKKRYDGLRKKLKDFLSSRGLKLQNLDDFHRLVKLAAKDKEAREALLAWHESLNIAVN) form a thM region region. Residues 311–439 (KIEKLREILQ…DYRLSRRRRE (129 aa)) enclose the Helicase C-terminal domain.

This sequence belongs to the helicase family. RAD25/XPB subfamily. As to quaternary structure, forms a heterodimer with Bax1.

The enzyme catalyses Couples ATP hydrolysis with the unwinding of duplex DNA by translocating in the 3'-5' direction.. It carries out the reaction ATP + H2O = ADP + phosphate + H(+). Its function is as follows. ATP-dependent DNA translocase which moves along double-stranded DNA (dsDNA) in a 3'-5' direction, unwinding the DNA. The ThM domain grips the resulting 3'-ssDNA tail and functions as a wedge (particularly Phe-278), breaking dsDNA base pairs, probably using the energy from ATP hydrolysis to move along dsDNA. A DNA-dependent ATPase; double-stranded DNA (dsDNA) stimulates the activity more than single-stranded DNA (ssDNA), while Bax1 stimulates ATPase more. In an in vitro assay had no detectable helicase activity. Binds ssDNA better than dsDNA. Has very low ATPase activity that is stimulated by Bax1; dsDNA, Y-form DNA and a DNA substrate with a 6 base pair (bp) bubble in the center stimulate the XPB2-Bax1 ATPase activity about 10- 20-fold more than the absence of DNA. In an XPB2-Bax1-bubble DNA crystal (12 bp of dsDNA, a 6 base bubble and 6 bp of dsDNA) the short 6 bp arm is unwound. The 2 helicase and the ThM domains of XPB2 with the NTD and CRD domains of Bax1 encircle the DNA, forming a tunnel where the 12 bp dsDNA and the ds-ssDNA junction are located. The ThM domain is wedged between the ssDNA tails, with the 5' ssDNA contacting Bax1 and the 3' ssDNA in a channel in XPB2. Bax1 increases the affinity of XPB2 for forked DNA. This Sulfurisphaera tokodaii (strain DSM 16993 / JCM 10545 / NBRC 100140 / 7) (Sulfolobus tokodaii) protein is DNA 3'-5' translocase XPB2.